The following is a 100-amino-acid chain: Urease subunit gamma (100 aa).

The protein belongs to the urease gamma subunit family. Heterotrimer of UreA (gamma), UreB (beta) and UreC (alpha) subunits. Three heterotrimers associate to form the active enzyme.

Its subcellular location is the cytoplasm. It catalyses the reaction urea + 2 H2O + H(+) = hydrogencarbonate + 2 NH4(+). It functions in the pathway nitrogen metabolism; urea degradation; CO(2) and NH(3) from urea (urease route): step 1/1. This is Urease subunit gamma from Burkholderia ambifaria (strain MC40-6).